The chain runs to 572 residues: Protein misato homolog 1 (572 aa).

This sequence belongs to the misato family.

It is found in the mitochondrion outer membrane. The protein resides in the cytoplasm. In terms of biological role, involved in the regulation of mitochondrial distribution and morphology. Required for mitochondrial fusion and mitochondrial network formation. This Bos taurus (Bovine) protein is Protein misato homolog 1 (MSTO1).